A 186-amino-acid chain; its full sequence is Probable nicotinate-nucleotide adenylyltransferase (186 aa).

This sequence belongs to the NadD family.

The enzyme catalyses nicotinate beta-D-ribonucleotide + ATP + H(+) = deamido-NAD(+) + diphosphate. The protein operates within cofactor biosynthesis; NAD(+) biosynthesis; deamido-NAD(+) from nicotinate D-ribonucleotide: step 1/1. In terms of biological role, catalyzes the reversible adenylation of nicotinate mononucleotide (NaMN) to nicotinic acid adenine dinucleotide (NaAD). This chain is Probable nicotinate-nucleotide adenylyltransferase, found in Tropheryma whipplei (strain Twist) (Whipple's bacillus).